The chain runs to 560 residues: Cytosolic purine 5'-nucleotidase (560 aa).

Residue aspartate 52 is the Nucleophile of the active site. Residues aspartate 52 and aspartate 54 each contribute to the IMP site. 2 residues coordinate Mg(2+): aspartate 52 and aspartate 54. The Proton donor role is filled by aspartate 54. ATP is bound by residues arginine 144 and asparagine 154. IMP is bound by residues arginine 202, aspartate 206, lysine 215, threonine 249, asparagine 250, serine 251, and lysine 292. A Mg(2+)-binding site is contributed by aspartate 351. Residue serine 418 is modified to Phosphoserine. Glutamine 453 and arginine 456 together coordinate ATP. Phosphoserine occurs at positions 502, 511, and 527. Residues 541–560 form a disordered region; it reads PQEITHCHDEDDDEEEEEEE. The interval 548-560 is required for tetramer assembly; the sequence is HDEDDDEEEEEEE. The span at 550-560 shows a compositional bias: acidic residues; sequence EDDDEEEEEEE.

It belongs to the 5'(3')-deoxyribonucleotidase family. As to quaternary structure, homotetramer. The cofactor is Mg(2+).

The protein resides in the cytoplasm. The protein localises to the cytosol. It catalyses the reaction a ribonucleoside 5'-phosphate + H2O = a ribonucleoside + phosphate. The enzyme catalyses a 2'-deoxyribonucleoside + a ribonucleoside 5'-phosphate = a ribonucleoside + a 2'-deoxyribonucleoside 5'-phosphate. It carries out the reaction IMP + H2O = inosine + phosphate. The catalysed reaction is GMP + H2O = guanosine + phosphate. It catalyses the reaction dIMP + H2O = 2'-deoxyinosine + phosphate. The enzyme catalyses dGMP + H2O = 2'-deoxyguanosine + phosphate. It carries out the reaction XMP + H2O = xanthosine + phosphate. The catalysed reaction is inosine + GMP = guanosine + IMP. It catalyses the reaction dGMP + inosine = 2'-deoxyguanosine + IMP. The enzyme catalyses dIMP + inosine = 2'-deoxyinosine + IMP. It carries out the reaction inosine + UMP = uridine + IMP. The catalysed reaction is inosine + CMP = cytidine + IMP. It catalyses the reaction inosine + AMP = IMP + adenosine. With respect to regulation, allosterically activated by various compounds including ATP, 2,3-BPG/2,3-Bisphosphoglyceric acid and Ap4A/P1,P4-bis(5'-adenosyl) tetraphosphate. Binding of an allosteric activator is a prerequisiste to magnesium and substrate binding. Inhibited by inorganic phosphate. In terms of biological role, broad specificity cytosolic 5'-nucleotidase that catalyzes the dephosphorylation of 6-hydroxypurine nucleoside 5'-monophosphates. In addition, possesses a phosphotransferase activity by which it can transfer a phosphate from a donor nucleoside monophosphate to an acceptor nucleoside, preferably inosine, deoxyinosine and guanosine. Has the highest activities for IMP and GMP followed by dIMP, dGMP and XMP. Could also catalyze the transfer of phosphates from pyrimidine monophosphates but with lower efficiency. Through these activities regulates the purine nucleoside/nucleotide pools within the cell. The chain is Cytosolic purine 5'-nucleotidase from Rattus norvegicus (Rat).